A 614-amino-acid chain; its full sequence is Adenylate kinase 7 (614 aa).

The tract at residues 258-503 (PIKICILGPP…KEIGKPRNYG (246 aa)) is adenylate kinase. ATP is bound at residue 268-273 (AVGKSS). Residues 288–346 (KMKDVIAEAIAKLEAIVAPKDSVEGEEEGEEEEEEENVDDAQELLDGIKESMEQNAGRL) are NMP. The interval 308-327 (DSVEGEEEGEEEEEEENVDD) is disordered. Over residues 311-327 (EGEEEGEEEEEEENVDD) the composition is skewed to acidic residues. Residues 323 to 346 (ENVDDAQELLDGIKESMEQNAGRL), 373 to 376 (GFPK), and Gln-380 each bind AMP. Positions 376-568 (KTYDQAKDLF…EERELLEVQS (193 aa)) form a coiled coil. An LID region spans residues 428–438 (NLPESVVAGTH). Arg-446 provides a ligand contact to AMP. Gly-478 contacts ATP. Residues 570–614 (PLRNYLMTYVMPTLMQGLNECCKVRPEDPVDFLAEYLFKNNPEMQ) form a DPY-30 region.

It in the central section; belongs to the adenylate kinase family. This sequence in the C-terminal section; belongs to the dpy-30 family.

It is found in the cytoplasm. The protein localises to the cytosol. The protein resides in the cell projection. Its subcellular location is the cilium. It localises to the flagellum. It carries out the reaction AMP + ATP = 2 ADP. The catalysed reaction is a 2'-deoxyribonucleoside 5'-diphosphate + ATP = a 2'-deoxyribonucleoside 5'-triphosphate + ADP. The enzyme catalyses a ribonucleoside 5'-diphosphate + ATP = a ribonucleoside 5'-triphosphate + ADP. In terms of biological role, nucleoside monophosphate (NMP) kinase that catalyzes the reversible transfer of the terminal phosphate group between nucleoside triphosphates and monophosphates. Has highest activity toward AMP, and weaker activity toward dAMP, CMP and dCMP. Also displays broad nucleoside diphosphate kinase activity. Involved in maintaining ciliary structure and function. In Mus musculus (Mouse), this protein is Adenylate kinase 7 (Ak7).